A 646-amino-acid chain; its full sequence is UvrABC system protein B (646 aa).

Positions 29–411 constitute a Helicase ATP-binding domain; sequence LEKNPEKSKQ…SNQVVEQIIR (383 aa). 42–49 is a binding site for ATP; the sequence is GVTGSGKT. The Beta-hairpin motif lies at 95–118; the sequence is YYDYYQPESYIPQKDQYIEKDAQI. The 163-residue stretch at 428-590 folds into the Helicase C-terminal domain; the sequence is QVEDIIKETE…ITPQTIVKPI (163 aa). The UVR domain occupies 609-644; sequence PNVIVELEAEMYEAAEALEFEKAIKIRDTIAKLKKK.

It belongs to the UvrB family. As to quaternary structure, forms a heterotetramer with UvrA during the search for lesions. Interacts with UvrC in an incision complex.

The protein localises to the cytoplasm. The UvrABC repair system catalyzes the recognition and processing of DNA lesions. A damage recognition complex composed of 2 UvrA and 2 UvrB subunits scans DNA for abnormalities. Upon binding of the UvrA(2)B(2) complex to a putative damaged site, the DNA wraps around one UvrB monomer. DNA wrap is dependent on ATP binding by UvrB and probably causes local melting of the DNA helix, facilitating insertion of UvrB beta-hairpin between the DNA strands. Then UvrB probes one DNA strand for the presence of a lesion. If a lesion is found the UvrA subunits dissociate and the UvrB-DNA preincision complex is formed. This complex is subsequently bound by UvrC and the second UvrB is released. If no lesion is found, the DNA wraps around the other UvrB subunit that will check the other stand for damage. This Methanococcus maripaludis (strain DSM 14266 / JCM 13030 / NBRC 101832 / S2 / LL) protein is UvrABC system protein B.